We begin with the raw amino-acid sequence, 202 residues long: Orotate phosphoribosyltransferase (202 aa).

5-phospho-alpha-D-ribose 1-diphosphate is bound by residues K93 and 113–121 (EDIITTGGS). Orotate is bound by residues T117 and R145.

This sequence belongs to the purine/pyrimidine phosphoribosyltransferase family. PyrE subfamily. Homodimer. The cofactor is Mg(2+).

The enzyme catalyses orotidine 5'-phosphate + diphosphate = orotate + 5-phospho-alpha-D-ribose 1-diphosphate. Its pathway is pyrimidine metabolism; UMP biosynthesis via de novo pathway; UMP from orotate: step 1/2. Catalyzes the transfer of a ribosyl phosphate group from 5-phosphoribose 1-diphosphate to orotate, leading to the formation of orotidine monophosphate (OMP). This Campylobacter jejuni subsp. doylei (strain ATCC BAA-1458 / RM4099 / 269.97) protein is Orotate phosphoribosyltransferase.